Consider the following 345-residue polypeptide: NADH-quinone oxidoreductase subunit H (345 aa).

Helical transmembrane passes span 9–29 (ALGA…LVFA), 82–102 (VVMV…EGVV), 108–128 (VGVI…TLAG), 154–174 (MGLA…MEIV), 183–203 (LLGW…VTAF), 241–261 (YVNW…GYLV), 282–302 (LLQF…FIWV), and 325–345 (IALA…AVGL).

It belongs to the complex I subunit 1 family. In terms of assembly, NDH-1 is composed of 14 different subunits. Subunits NuoA, H, J, K, L, M, N constitute the membrane sector of the complex.

The protein localises to the cell inner membrane. It carries out the reaction a quinone + NADH + 5 H(+)(in) = a quinol + NAD(+) + 4 H(+)(out). Functionally, NDH-1 shuttles electrons from NADH, via FMN and iron-sulfur (Fe-S) centers, to quinones in the respiratory chain. The immediate electron acceptor for the enzyme in this species is believed to be ubiquinone. Couples the redox reaction to proton translocation (for every two electrons transferred, four hydrogen ions are translocated across the cytoplasmic membrane), and thus conserves the redox energy in a proton gradient. This subunit may bind ubiquinone. This chain is NADH-quinone oxidoreductase subunit H, found in Salinibacter ruber (strain DSM 13855 / M31).